The chain runs to 349 residues: Ribosomal RNA large subunit methyltransferase M (349 aa).

S-adenosyl-L-methionine is bound by residues S183, 216 to 219, D235, D255, and D271; that span reads APGG. Catalysis depends on K300, which acts as the Proton acceptor.

This sequence belongs to the class I-like SAM-binding methyltransferase superfamily. RNA methyltransferase RlmE family. RlmM subfamily. Monomer.

It localises to the cytoplasm. It carries out the reaction cytidine(2498) in 23S rRNA + S-adenosyl-L-methionine = 2'-O-methylcytidine(2498) in 23S rRNA + S-adenosyl-L-homocysteine + H(+). Catalyzes the 2'-O-methylation at nucleotide C2498 in 23S rRNA. The sequence is that of Ribosomal RNA large subunit methyltransferase M from Stutzerimonas stutzeri (strain A1501) (Pseudomonas stutzeri).